Here is a 789-residue protein sequence, read N- to C-terminus: MTKPAADASAVLTAEDTLVLASTATPVEMELIMGWLGQQRARHPDSKFDILKLPPRNAPPAALTALVEQLEPGFASSPQSGEDRSIVPVRVIWLPPADRSRAGKVAALLPGRDPYHPSQRQQRRILRTDPRRARVVAGESAKVSELRQQWRDTTVAEHKRDFAQFVSRRALLALARAEYQILGPQYKSPRLVKPEMLASARFRAGLDRIPGATVEDAGKMLDELSTGWSQVSVDLVSVLGRLASRGFDPEFDYDEYQVAAMRAALEAHPAVLLFSHRSYIDGVVVPVAMQDNRLPPVHMFGGINLSFGLMGPLMRRSGMIFIRRNIGNDPLYKYVLKEYVGYVVEKRFNLSWSIEGTRSRTGKMLPPKLGLMSYVADAYLDGRSDDILLQGVSICFDQLHEITEYAAYARGAEKTPEGLRWLYNFIKAQGERNFGKIYVRFPEAVSMRQYLGAPHGELTQDPAAKRLALQKMSFEVAWRILQATPVTATGLVSALLLTTRGTALTLDQLHHTLQDSLDYLERKQSPVSTSALRLRSREGVRAAADALSNGHPVTRVDSGREPVWYIAPDDEHAAAFYRNSVIHAFLETSIVELALAHAKHAEGDRVAAFWAQAMRLRDLLKFDFYFADSTAFRANIAQEMAWHQDWEDHLGVGGNEIDAMLYAKRPLMSDAMLRVFFEAYEIVADVLRDAPPDIGPEELTELALGLGRQFVAQGRVRSSEPVSTLLFATARQVAVDQELIAPAADLAERRVAFRRELRNILRDFDYVEQIARNQFVAREFKARQGRDRI.

The HXXXXD motif signature appears at 276–281 (HRSYID).

The protein belongs to the GPAT/DAPAT family.

Its subcellular location is the cell membrane. The enzyme catalyses sn-glycerol 3-phosphate + an acyl-CoA = a 1-acyl-sn-glycero-3-phosphate + CoA. It functions in the pathway phospholipid metabolism; CDP-diacylglycerol biosynthesis; CDP-diacylglycerol from sn-glycerol 3-phosphate: step 1/3. The polypeptide is Glycerol-3-phosphate acyltransferase (plsB) (Mycobacterium tuberculosis (strain CDC 1551 / Oshkosh)).